A 268-amino-acid polypeptide reads, in one-letter code: Type-5 uracil-DNA glycosylase (268 aa).

A disordered region spans residues 1–29 (MHPKTGRAFRSPVEPGSGWPGDPATPQTP). Positions 57, 60, 161, and 176 each coordinate [4Fe-4S] cluster.

Belongs to the uracil-DNA glycosylase (UDG) superfamily. Type 5 (UDGb) family.

DNA glycosylase with broad substrate specificity. This Mycobacterium bovis (strain ATCC BAA-935 / AF2122/97) protein is Type-5 uracil-DNA glycosylase.